A 277-amino-acid polypeptide reads, in one-letter code: 2-dehydro-3-deoxyphosphooctonate aldolase (277 aa).

The protein belongs to the KdsA family.

It is found in the cytoplasm. The catalysed reaction is D-arabinose 5-phosphate + phosphoenolpyruvate + H2O = 3-deoxy-alpha-D-manno-2-octulosonate-8-phosphate + phosphate. It participates in carbohydrate biosynthesis; 3-deoxy-D-manno-octulosonate biosynthesis; 3-deoxy-D-manno-octulosonate from D-ribulose 5-phosphate: step 2/3. The protein operates within bacterial outer membrane biogenesis; lipopolysaccharide biosynthesis. The protein is 2-dehydro-3-deoxyphosphooctonate aldolase of Hydrogenovibrio crunogenus (strain DSM 25203 / XCL-2) (Thiomicrospira crunogena).